The sequence spans 690 residues: uncharacterized protein (690 aa).

This is an uncharacterized protein from Acanthamoeba polyphaga (Amoeba).